Reading from the N-terminus, the 179-residue chain is Crossover junction endodeoxyribonuclease RuvC (179 aa).

Catalysis depends on residues Asp-7, Glu-67, and Asp-139. The Mg(2+) site is built by Asp-7, Glu-67, and Asp-139.

It belongs to the RuvC family. As to quaternary structure, homodimer which binds Holliday junction (HJ) DNA. The HJ becomes 2-fold symmetrical on binding to RuvC with unstacked arms; it has a different conformation from HJ DNA in complex with RuvA. In the full resolvosome a probable DNA-RuvA(4)-RuvB(12)-RuvC(2) complex forms which resolves the HJ. Mg(2+) serves as cofactor.

Its subcellular location is the cytoplasm. The enzyme catalyses Endonucleolytic cleavage at a junction such as a reciprocal single-stranded crossover between two homologous DNA duplexes (Holliday junction).. The RuvA-RuvB-RuvC complex processes Holliday junction (HJ) DNA during genetic recombination and DNA repair. Endonuclease that resolves HJ intermediates. Cleaves cruciform DNA by making single-stranded nicks across the HJ at symmetrical positions within the homologous arms, yielding a 5'-phosphate and a 3'-hydroxyl group; requires a central core of homology in the junction. The consensus cleavage sequence is 5'-(A/T)TT(C/G)-3'. Cleavage occurs on the 3'-side of the TT dinucleotide at the point of strand exchange. HJ branch migration catalyzed by RuvA-RuvB allows RuvC to scan DNA until it finds its consensus sequence, where it cleaves and resolves the cruciform DNA. The sequence is that of Crossover junction endodeoxyribonuclease RuvC from Sorangium cellulosum (strain So ce56) (Polyangium cellulosum (strain So ce56)).